We begin with the raw amino-acid sequence, 771 residues long: Transcription factor TAS2 (771 aa).

The segment at 33 to 53 (RSRAESASGPQQPSRRQPQTS) is disordered. The segment covering 42 to 51 (PQQPSRRQPQ) has biased composition (low complexity). Residues 54 to 80 (CDLCRSRKIKCDRGTPCGNCRTRGLAC) constitute a DNA-binding region (zn(2)-C6 fungal-type). Residues 125 to 150 (AVGGSGNAENGAHGDATPRVPLSGLE) form a disordered region.

The protein localises to the nucleus. Functionally, transcription factor; part of the gene cluster that mediates the biosynthesis of the toxin tenuazonic acid (TeA), an inhibitor of protein biosynthesis on ribosomes by suppressing the release of new protein. Directly regulates the expression of the hybrid PKS-NRPS synthetase TAS1 and the subsequent production of TeA. In Pyricularia oryzae (strain 70-15 / ATCC MYA-4617 / FGSC 8958) (Rice blast fungus), this protein is Transcription factor TAS2.